A 684-amino-acid polypeptide reads, in one-letter code: PAN2-PAN3 deadenylation complex subunit PAN3 (684 aa).

Disordered stretches follow at residues 1-38 (MLPP…RETA), 68-97 (DPST…PARE), and 112-146 (VPKG…STGL). Positions 21–38 (EKAKEKEKKHSPEKRETA) are enriched in basic and acidic residues. The segment at 36–65 (ETAQRICRNVMIYGYCKYQDQGCIYYHPPA) adopts a C3H1-type zinc-finger fold. Residues 127–139 (VPTPSAPTPPVWP) show a composition bias toward pro residues. A pseudokinase domain region spans residues 263–544 (GANGASAPGL…SIDEVVKMMG (282 aa)). Residues Arg-326 and 375–382 (DYHPLSTT) each bind ATP. The segment at 387-412 (YLSPNPPEPSPASALANQPPKRRSSP) is disordered. 444 to 445 (SK) contacts ATP. Residues 545–583 (PRILNELDAVQSYADVLENELGAEVENGRIVRLLTKLGF) are a coiled coil. Residues 584–684 (INERAEFELD…NAGNNHRVHR (101 aa)) are knob domain.

Belongs to the protein kinase superfamily. PAN3 family. As to quaternary structure, homodimer. Forms a heterotrimer with a catalytic subunit PAN2 to form the poly(A)-nuclease (PAN) deadenylation complex. Interacts (via PAM-2 motif) with poly(A)-binding protein PAB1 (via PABC domain), conferring substrate specificity of the enzyme complex.

It localises to the cytoplasm. Its function is as follows. Regulatory subunit of the poly(A)-nuclease (PAN) deadenylation complex, one of two cytoplasmic mRNA deadenylases involved in mRNA turnover. PAN specifically shortens poly(A) tails of RNA and the activity is stimulated by poly(A)-binding protein PAB1. PAN deadenylation is followed by rapid degradation of the shortened mRNA tails by the CCR4-NOT complex. Deadenylated mRNAs are then degraded by two alternative mechanisms, namely exosome-mediated 3'-5' exonucleolytic degradation, or deadenylation-dependent mRNA decaping and subsequent 5'-3' exonucleolytic degradation by XRN1. May also be involved in post-transcriptional maturation of mRNA poly(A) tails. PAN3 acts as a positive regulator for PAN activity, recruiting the catalytic subunit PAN2 to mRNA via its interaction with RNA and with PAB1. The polypeptide is PAN2-PAN3 deadenylation complex subunit PAN3 (Cryptococcus neoformans var. neoformans serotype D (strain B-3501A) (Filobasidiella neoformans)).